The sequence spans 193 residues: Deoxycytidylate deaminase (193 aa).

The CMP/dCMP-type deaminase domain occupies 1-171 (MKASTVLQIA…DILRNAGIEV (171 aa)). Residues Cys19, Cys49, His94, Glu102, and His104 each contribute to the Zn(2+) site. Residue Glu106 is the Proton donor of the active site. Positions 132 and 135 each coordinate Zn(2+). Tyr153 provides a ligand contact to substrate.

Belongs to the cytidine and deoxycytidylate deaminase family. As to quaternary structure, homohexamer. Zn(2+) serves as cofactor.

The enzyme catalyses dCMP + H2O + H(+) = dUMP + NH4(+). Allosteric enzyme whose activity is greatly influenced by the end products of its metabolic pathway, dCTP and dTTP. In terms of biological role, supplies the nucleotide substrate for thymidylate synthetase. In Escherichia coli (Bacteriophage T4), this protein is Deoxycytidylate deaminase (CD).